The chain runs to 156 residues: 6,7-dimethyl-8-ribityllumazine synthase (156 aa).

Residues phenylalanine 23, 57–59 (AYE), and 81–83 (AII) each bind 5-amino-6-(D-ribitylamino)uracil. 86 to 87 (ST) contributes to the (2S)-2-hydroxy-3-oxobutyl phosphate binding site. Histidine 89 functions as the Proton donor in the catalytic mechanism. Phenylalanine 114 contributes to the 5-amino-6-(D-ribitylamino)uracil binding site. Position 128 (arginine 128) interacts with (2S)-2-hydroxy-3-oxobutyl phosphate.

It belongs to the DMRL synthase family.

It catalyses the reaction (2S)-2-hydroxy-3-oxobutyl phosphate + 5-amino-6-(D-ribitylamino)uracil = 6,7-dimethyl-8-(1-D-ribityl)lumazine + phosphate + 2 H2O + H(+). The protein operates within cofactor biosynthesis; riboflavin biosynthesis; riboflavin from 2-hydroxy-3-oxobutyl phosphate and 5-amino-6-(D-ribitylamino)uracil: step 1/2. Functionally, catalyzes the formation of 6,7-dimethyl-8-ribityllumazine by condensation of 5-amino-6-(D-ribitylamino)uracil with 3,4-dihydroxy-2-butanone 4-phosphate. This is the penultimate step in the biosynthesis of riboflavin. This chain is 6,7-dimethyl-8-ribityllumazine synthase, found in Campylobacter hominis (strain ATCC BAA-381 / DSM 21671 / CCUG 45161 / LMG 19568 / NCTC 13146 / CH001A).